The primary structure comprises 301 residues: Hydroxymycolate synthase MmaA4 (301 aa).

S-adenosyl-L-methionine-binding positions include 42 to 43 (YS), 81 to 83 (GCG), 103 to 108 (TLSKNQ), 132 to 133 (WE), and I145. Residue C278 is part of the active site.

This sequence belongs to the CFA/CMAS family. Monomer.

It participates in lipid metabolism; mycolic acid biosynthesis. Inhibited by S-adenosyl-N-decyl-aminoethyl (SADAE). Its function is as follows. Involved in the biosynthesis of hydroxymycolate, a common precursor of oxygenated mycolic acids (methoxy-mycolate and keto-mycolate). Probably transfers a methyl group from the S-adenosylmethionine (SAM) cofactor and, subsequently or simultaneously, a water molecule onto the double bound of ethylene substrates, leading to the formation of the hydroxylated product at the distal position. Involved in the activation of the antitubercular drug thiacetazone (TAC). The chain is Hydroxymycolate synthase MmaA4 (mmaA4) from Mycobacterium tuberculosis (strain ATCC 25618 / H37Rv).